We begin with the raw amino-acid sequence, 322 residues long: Follistatin-A (322 aa).

Positions 1 to 32 (MLRMLKRQQLHPGMILLLFWLCYLIEDQKVQA) are cleaved as a signal peptide. Positions 33–106 (GNCWLQQGKN…TCDNVDCGPG (74 aa)) constitute a TB domain. Disulfide bonds link Cys35–Cys58, Cys45–Cys91, Cys59–Cys94, Cys98–Cys109, Cys103–Cys119, Cys121–Cys153, Cys125–Cys146, and Cys135–Cys167. Residue Asn75 is glycosylated (N-linked (GlcNAc...) asparagine). Positions 97 to 120 (TCDNVDCGPGKRCKMNRRSKPRCV) constitute a Follistatin-like 1 domain. 3 Kazal-like domains span residues 103-169 (CGPG…KCKK), 189-244 (NAYC…KCIK), and 267-321 (RGRC…SCNC). Residue Asn127 is glycosylated (N-linked (GlcNAc...) asparagine). The region spanning 170–193 (TCRDVLCPGSSTCVVDQTNNAYCV) is the Follistatin-like 2 domain. 3 disulfide bridges follow: Cys195–Cys228, Cys199–Cys221, and Cys210–Cys242. The 25-residue stretch at 247 to 271 (SCDDIHCSAGKKCLWDAKMSRGRCA) folds into the Follistatin-like 3 domain. Cystine bridges form between Cys273–Cys305, Cys277–Cys298, and Cys287–Cys319. Asn291 is a glycosylation site (N-linked (GlcNAc...) asparagine).

Monomer. Not expressed in the organizer region. Expression in gastrulating embryos is confined to anterior and paraxial regions, which give rise to head mesoderm and the first five somites. In addition, expressed transiently in a subset of cells in the posterior notochord anlage. Later, expression is seen in brain, eyes and somites.

Its function is as follows. Binds directly to activin and functions as an activin antagonist. Specific inhibitor of the biosynthesis and secretion of pituitary follicle stimulating hormone (fsh). Inhibits bmp-signaling during later stages of development including late phases of dorsoventral patterning, to refine the early pattern set up by the interaction of chordino and bmp2/4. Not involved in organizer function or early phases of dorsoventral pattern formation. The sequence is that of Follistatin-A (fsta) from Danio rerio (Zebrafish).